A 213-amino-acid polypeptide reads, in one-letter code: uncharacterized protein (213 aa).

This is an uncharacterized protein from Bacillus subtilis (strain 168).